A 303-amino-acid chain; its full sequence is N-acetylmuramic acid 6-phosphate etherase (303 aa).

The SIS domain maps to 60–223 (ATASLQAGGR…STGVMVKLGK (164 aa)). Glu-88 acts as the Proton donor in catalysis. Glu-119 is a catalytic residue.

The protein belongs to the GCKR-like family. MurNAc-6-P etherase subfamily. Homodimer.

It catalyses the reaction N-acetyl-D-muramate 6-phosphate + H2O = N-acetyl-D-glucosamine 6-phosphate + (R)-lactate. The protein operates within amino-sugar metabolism; 1,6-anhydro-N-acetylmuramate degradation. Its pathway is amino-sugar metabolism; N-acetylmuramate degradation. It functions in the pathway cell wall biogenesis; peptidoglycan recycling. In terms of biological role, specifically catalyzes the cleavage of the D-lactyl ether substituent of MurNAc 6-phosphate, producing GlcNAc 6-phosphate and D-lactate. Together with AnmK, is also required for the utilization of anhydro-N-acetylmuramic acid (anhMurNAc) either imported from the medium or derived from its own cell wall murein, and thus plays a role in cell wall recycling. This Pectobacterium atrosepticum (strain SCRI 1043 / ATCC BAA-672) (Erwinia carotovora subsp. atroseptica) protein is N-acetylmuramic acid 6-phosphate etherase.